A 93-amino-acid polypeptide reads, in one-letter code: Mitochondrial import inner membrane translocase subunit Tim10-A (93 aa).

A Twin CX3C motif motif is present at residues 32–57; sequence CHKKCVPPHYKEAELSKGESVCLDRC. 2 cysteine pairs are disulfide-bonded: C32-C57 and C36-C53.

Belongs to the small Tim family. Heterohexamer; composed of 3 copies of TIMM9 and 3 copies of TIMM10/TIM10A, named soluble 70 kDa complex. The complex forms a 6-bladed alpha-propeller structure and associates with the TIMM22 component of the TIM22 complex. Interacts with multi-pass transmembrane proteins in transit.

The protein localises to the mitochondrion inner membrane. Functionally, mitochondrial intermembrane chaperone that participates in the import and insertion of multi-pass transmembrane proteins into the mitochondrial inner membrane. May also be required for the transfer of beta-barrel precursors from the TOM complex to the sorting and assembly machinery (SAM complex) of the outer membrane. Acts as a chaperone-like protein that protects the hydrophobic precursors from aggregation and guide them through the mitochondrial intermembrane space. The chain is Mitochondrial import inner membrane translocase subunit Tim10-A (timm10-a) from Xenopus laevis (African clawed frog).